The primary structure comprises 360 residues: MLSSRLQFAQQTARKFSISAKDGSGKLSTLAVKVHGGSRYADKEGIAHLLSRFNFHNTGNKSALRLVRESELLGGKFESSVDREYITLKATFLKEDLPYFVNALGNVLYKTSFRPHELPESVLPAAKYDISVSETNPINKAEDLLYNVSFRKDLGNTVLYRGVEKVTLDDIKAYANKVYTKENIEIVGQGVNEADLKRFVNDSLIGSLPTGSKLAAQAQPKFFSGEARLSAPGASVAAIAVPVTKEQFATYEVLAKYLTSALSELSPLIDSAKLDKYANAGLFSLYVKGEDASVVAENIKKVVDTLKKDVDISAAKEYTALQLSLENAPIDVSNVKNVKLDKFSYAAVGNVAKLPFADEL.

A mitochondrion-targeting transit peptide spans 1–15; it reads MLSSRLQFAQQTARK.

This sequence belongs to the peptidase M16 family. UQCRC2/QCR2 subfamily. As to quaternary structure, component of the ubiquinol-cytochrome c oxidoreductase (cytochrome b-c1 complex, complex III, CIII), a multisubunit enzyme composed of 3 respiratory subunits cytochrome b, cytochrome c1 and Rieske protein, 2 core protein subunits, and additional low-molecular weight protein subunits. The complex exists as an obligatory dimer and forms supercomplexes (SCs) in the inner mitochondrial membrane with cytochrome c oxidase (complex IV, CIV).

The protein resides in the mitochondrion inner membrane. In terms of biological role, component of the ubiquinol-cytochrome c oxidoreductase, a multisubunit transmembrane complex that is part of the mitochondrial electron transport chain which drives oxidative phosphorylation. The respiratory chain contains 3 multisubunit complexes succinate dehydrogenase (complex II, CII), ubiquinol-cytochrome c oxidoreductase (cytochrome b-c1 complex, complex III, CIII) and cytochrome c oxidase (complex IV, CIV), that cooperate to transfer electrons derived from NADH and succinate to molecular oxygen, creating an electrochemical gradient over the inner membrane that drives transmembrane transport and the ATP synthase. The cytochrome b-c1 complex catalyzes electron transfer from ubiquinol to cytochrome c, linking this redox reaction to translocation of protons across the mitochondrial inner membrane, with protons being carried across the membrane as hydrogens on the quinol. In the process called Q cycle, 2 protons are consumed from the matrix, 4 protons are released into the intermembrane space and 2 electrons are passed to cytochrome c. The protein is Cytochrome b-c1 complex subunit 2, mitochondrial (QCR2) of Kluyveromyces lactis (strain ATCC 8585 / CBS 2359 / DSM 70799 / NBRC 1267 / NRRL Y-1140 / WM37) (Yeast).